The following is a 169-amino-acid chain: Lipoprotein signal peptidase (169 aa).

4 helical membrane-spanning segments follow: residues L10–F30, I40–S60, W68–L88, and G94–Y114. Active-site residues include D124 and D143. A helical transmembrane segment spans residues Y135–L155.

This sequence belongs to the peptidase A8 family.

The protein localises to the cell inner membrane. The enzyme catalyses Release of signal peptides from bacterial membrane prolipoproteins. Hydrolyzes -Xaa-Yaa-Zaa-|-(S,diacylglyceryl)Cys-, in which Xaa is hydrophobic (preferably Leu), and Yaa (Ala or Ser) and Zaa (Gly or Ala) have small, neutral side chains.. It participates in protein modification; lipoprotein biosynthesis (signal peptide cleavage). This protein specifically catalyzes the removal of signal peptides from prolipoproteins. This Pseudomonas aeruginosa (strain UCBPP-PA14) protein is Lipoprotein signal peptidase.